Here is a 90-residue protein sequence, read N- to C-terminus: Heat shock protein beta-7 (90 aa).

In terms of domain architecture, sHSP spans 39–90; sequence PLTFPARPGGQGNIKTLGDAYEFTVDMRDFSPEDIIVTTSNNHIEVRAEKKP.

The protein belongs to the small heat shock protein (HSP20) family. As to quaternary structure, interacts with C-terminal domain of actin-binding protein 280. Found in both cardiac and skeletal muscle.

Its subcellular location is the cytoplasm. It is found in the nucleus. The protein resides in the cajal body. The chain is Heat shock protein beta-7 (Hspb7) from Rattus norvegicus (Rat).